Consider the following 502-residue polypeptide: Probable malate:quinone oxidoreductase (502 aa).

The protein belongs to the MQO family. The cofactor is FAD.

The catalysed reaction is (S)-malate + a quinone = a quinol + oxaloacetate. Its pathway is carbohydrate metabolism; tricarboxylic acid cycle; oxaloacetate from (S)-malate (quinone route): step 1/1. In Synechococcus sp. (strain CC9902), this protein is Probable malate:quinone oxidoreductase.